A 517-amino-acid polypeptide reads, in one-letter code: BTB/POZ domain-containing protein At3g49900 (517 aa).

A compositionally biased stretch (low complexity) spans 28–37 (SSSSSSLSLS). The segment at 28 to 49 (SSSSSSLSLSPKQPINLSSSPS) is disordered. Residues 38-49 (PKQPINLSSSPS) show a composition bias toward polar residues. The BTB domain occupies 67–130 (PDVFVNVGGT…CYGAHIELTP (64 aa)). Positions 224–307 (LPAGDFNVVA…VRAMLQEQLN (84 aa)) constitute an NPH3 domain. The interval 409–456 (ARSASFHCVHQPSNVNKTQRGDRGSVSNLSTTYRRRRASPPQAQPQKS) is disordered.

This sequence belongs to the NPH3 family.

It participates in protein modification; protein ubiquitination. Its function is as follows. May act as a substrate-specific adapter of an E3 ubiquitin-protein ligase complex (CUL3-RBX1-BTB) which mediates the ubiquitination and subsequent proteasomal degradation of target proteins. This is BTB/POZ domain-containing protein At3g49900 from Arabidopsis thaliana (Mouse-ear cress).